We begin with the raw amino-acid sequence, 1081 residues long: Carbamoyl phosphate synthase large chain (1081 aa).

The segment at 1–410 (MPKRTDIKTI…SFQKALRGLE (410 aa)) is carboxyphosphate synthetic domain. Positions 129, 176, 182, 183, 215, 217, 222, 248, 249, 250, 292, and 306 each coordinate ATP. In terms of domain architecture, ATP-grasp 1 spans 133–335 (KEAMTKIGLG…IAKVAAKLAV (203 aa)). Residues glutamine 292, glutamate 306, and asparagine 308 each coordinate Mg(2+). 3 residues coordinate Mn(2+): glutamine 292, glutamate 306, and asparagine 308. Positions 411-558 (VGVDGLDEKS…YEAEHGECEA (148 aa)) are oligomerization domain. The interval 559–944 (DPTERKKIMV…ALFKSQLAAG (386 aa)) is carbamoyl phosphate synthetic domain. One can recognise an ATP-grasp 2 domain in the interval 683–878 (QKLLHDLGLR…LAKVAARCMA (196 aa)). Positions 719, 758, 760, 765, 790, 791, 792, 793, 833, and 849 each coordinate ATP. Glutamine 833, glutamate 849, and asparagine 851 together coordinate Mg(2+). Glutamine 833, glutamate 849, and asparagine 851 together coordinate Mn(2+). In terms of domain architecture, MGS-like spans 945-1081 (SRLPEKGTVL…YDLQGLHASL (137 aa)). The segment at 945-1081 (SRLPEKGTVL…YDLQGLHASL (137 aa)) is allosteric domain.

It belongs to the CarB family. In terms of assembly, composed of two chains; the small (or glutamine) chain promotes the hydrolysis of glutamine to ammonia, which is used by the large (or ammonia) chain to synthesize carbamoyl phosphate. Tetramer of heterodimers (alpha,beta)4. It depends on Mg(2+) as a cofactor. The cofactor is Mn(2+).

The catalysed reaction is hydrogencarbonate + L-glutamine + 2 ATP + H2O = carbamoyl phosphate + L-glutamate + 2 ADP + phosphate + 2 H(+). The enzyme catalyses hydrogencarbonate + NH4(+) + 2 ATP = carbamoyl phosphate + 2 ADP + phosphate + 2 H(+). It participates in amino-acid biosynthesis; L-arginine biosynthesis; carbamoyl phosphate from bicarbonate: step 1/1. It functions in the pathway pyrimidine metabolism; UMP biosynthesis via de novo pathway; (S)-dihydroorotate from bicarbonate: step 1/3. In terms of biological role, large subunit of the glutamine-dependent carbamoyl phosphate synthetase (CPSase). CPSase catalyzes the formation of carbamoyl phosphate from the ammonia moiety of glutamine, carbonate, and phosphate donated by ATP, constituting the first step of 2 biosynthetic pathways, one leading to arginine and/or urea and the other to pyrimidine nucleotides. The large subunit (synthetase) binds the substrates ammonia (free or transferred from glutamine from the small subunit), hydrogencarbonate and ATP and carries out an ATP-coupled ligase reaction, activating hydrogencarbonate by forming carboxy phosphate which reacts with ammonia to form carbamoyl phosphate. The polypeptide is Carbamoyl phosphate synthase large chain (Ralstonia nicotianae (strain ATCC BAA-1114 / GMI1000) (Ralstonia solanacearum)).